A 652-amino-acid polypeptide reads, in one-letter code: DNA ligase (652 aa).

NAD(+)-binding positions include 29–33 (DSEYD), 78–79 (SL), and Glu-107. The N6-AMP-lysine intermediate role is filled by Lys-109. NAD(+)-binding residues include Arg-130, Glu-164, Lys-278, and Lys-302. Residues Cys-395, Cys-398, Cys-413, and Cys-418 each coordinate Zn(2+). The BRCT domain maps to 577 to 652 (DRQAELFGLT…IEDEDWLLNL (76 aa)).

It belongs to the NAD-dependent DNA ligase family. LigA subfamily. Mg(2+) is required as a cofactor. The cofactor is Mn(2+).

It carries out the reaction NAD(+) + (deoxyribonucleotide)n-3'-hydroxyl + 5'-phospho-(deoxyribonucleotide)m = (deoxyribonucleotide)n+m + AMP + beta-nicotinamide D-nucleotide.. DNA ligase that catalyzes the formation of phosphodiester linkages between 5'-phosphoryl and 3'-hydroxyl groups in double-stranded DNA using NAD as a coenzyme and as the energy source for the reaction. It is essential for DNA replication and repair of damaged DNA. The chain is DNA ligase from Streptococcus equi subsp. zooepidemicus (strain MGCS10565).